The primary structure comprises 263 residues: Lysine 5,6-aminomutase beta subunit (263 aa).

Residues 120-259 (EVVMVGASTG…TFILKEMVQR (140 aa)) enclose the B12-binding domain. Adenosylcob(III)alamin is bound by residues 130-136 (TDAHTVG) and histidine 133. Lysine 144 is modified (N6-(pyridoxal phosphate)lysine). Adenosylcob(III)alamin is bound by residues 185 to 192 (LVSQTVTQ), 219 to 223 (IAGGA), and 239 to 244 (FGPGKY).

This sequence belongs to the KamE family. As to quaternary structure, heterotetramer of 2 alpha and 2 beta subunits. Adenosylcob(III)alamin serves as cofactor. Pyridoxal 5'-phosphate is required as a cofactor.

It catalyses the reaction (3S)-3,6-diaminohexanoate = (3S,5S)-3,5-diaminohexanoate. The enzyme catalyses D-lysine = (2R,5S)-2,5-diaminohexanoate. It functions in the pathway amino-acid degradation; L-lysine degradation via acetate pathway. Catalyzes the migration of the L-beta-lysine and D-lysine epsilon amino group to the delta carbon to produce 3,5-diaminohexanoate and 2,5-diaminohexanoate, respectively. This is Lysine 5,6-aminomutase beta subunit from Fusobacterium nucleatum subsp. nucleatum (strain ATCC 25586 / DSM 15643 / BCRC 10681 / CIP 101130 / JCM 8532 / KCTC 2640 / LMG 13131 / VPI 4355).